The sequence spans 344 residues: Dihydroorotate dehydrogenase (quinone) (344 aa).

Residues 65 to 69 and threonine 89 each bind FMN; that span reads AGLDK. Residue lysine 69 participates in substrate binding. 114–118 contacts substrate; that stretch reads NRMGF. FMN is bound by residues asparagine 142 and asparagine 175. A substrate-binding site is contributed by asparagine 175. Serine 178 (nucleophile) is an active-site residue. Asparagine 180 contributes to the substrate binding site. Residues lysine 220 and threonine 248 each contribute to the FMN site. 249 to 250 serves as a coordination point for substrate; it reads NT. FMN-binding positions include glycine 271, glycine 300, and 321 to 322; that span reads YT.

It belongs to the dihydroorotate dehydrogenase family. Type 2 subfamily. As to quaternary structure, monomer. It depends on FMN as a cofactor.

It is found in the cell membrane. The catalysed reaction is (S)-dihydroorotate + a quinone = orotate + a quinol. It functions in the pathway pyrimidine metabolism; UMP biosynthesis via de novo pathway; orotate from (S)-dihydroorotate (quinone route): step 1/1. Its function is as follows. Catalyzes the conversion of dihydroorotate to orotate with quinone as electron acceptor. The protein is Dihydroorotate dehydrogenase (quinone) of Paraburkholderia phymatum (strain DSM 17167 / CIP 108236 / LMG 21445 / STM815) (Burkholderia phymatum).